A 154-amino-acid chain; its full sequence is Transcriptional repressor NrdR (154 aa).

A zinc finger spans residues Cys3–Cys34. In terms of domain architecture, ATP-cone spans Leu46–Asp136.

Belongs to the NrdR family. Zn(2+) serves as cofactor.

Functionally, negatively regulates transcription of bacterial ribonucleotide reductase nrd genes and operons by binding to NrdR-boxes. This chain is Transcriptional repressor NrdR, found in Mycobacteroides abscessus (strain ATCC 19977 / DSM 44196 / CCUG 20993 / CIP 104536 / JCM 13569 / NCTC 13031 / TMC 1543 / L948) (Mycobacterium abscessus).